A 299-amino-acid chain; its full sequence is Proline iminopeptidase (299 aa).

The 251-residue stretch at 29 to 279 (PLLLLHGGPG…SRHMAFIDEP (251 aa)) folds into the AB hydrolase-1 domain. Residue S105 is the Nucleophile of the active site. Residue D245 is part of the active site. H272 serves as the catalytic Proton donor.

The protein belongs to the peptidase S33 family.

The protein resides in the cell envelope. The enzyme catalyses Release of N-terminal proline from a peptide.. Releases the N-terminal proline from various substrates. The protein is Proline iminopeptidase of Levilactobacillus brevis (strain ATCC 367 / BCRC 12310 / CIP 105137 / JCM 1170 / LMG 11437 / NCIMB 947 / NCTC 947) (Lactobacillus brevis).